A 219-amino-acid chain; its full sequence is Probable nicotinate-nucleotide adenylyltransferase (219 aa).

This sequence belongs to the NadD family.

It carries out the reaction nicotinate beta-D-ribonucleotide + ATP + H(+) = deamido-NAD(+) + diphosphate. It participates in cofactor biosynthesis; NAD(+) biosynthesis; deamido-NAD(+) from nicotinate D-ribonucleotide: step 1/1. Catalyzes the reversible adenylation of nicotinate mononucleotide (NaMN) to nicotinic acid adenine dinucleotide (NaAD). The chain is Probable nicotinate-nucleotide adenylyltransferase from Chromohalobacter salexigens (strain ATCC BAA-138 / DSM 3043 / CIP 106854 / NCIMB 13768 / 1H11).